We begin with the raw amino-acid sequence, 924 residues long: Protein SMAX1-LIKE 2 (924 aa).

In terms of domain architecture, Clp R spans 8–181; the sequence is IQQTLTPEAA…SAIEQSLIGN (174 aa). Residues 12–83 form a repeat 1 region; that stretch reads LTPEAATVLN…LCFSVALERL (72 aa). Residues 86–105 show a composition bias toward low complexity; it reads TSTTTTTTSSSSSSSPSQTQ. Residues 86–107 form a disordered region; the sequence is TSTTTTTTSSSSSSSPSQTQEP. The repeat 2 stretch occupies residues 109–181; the sequence is LSNALTAALK…SAIEQSLIGN (73 aa). Residues 522-552 form a disordered region; the sequence is TRSDITPPGSPVGTDLVLGRPNRGLSSPEKK. The EAR signature appears at 780 to 784; the sequence is FDLNE.

The protein belongs to the ClpA/ClpB family. In terms of assembly, interacts probably with TPL/TPR in an EAR-motif dependent manner. As to expression, expressed in seedlings and leaves. Detected in roots and axillary branches.

Functionally, probable component of a transcriptional corepressor complex that acts specifically in the karrikin pathway. Controls seedling growth redundantly with SMAX1, but is not involved in leaf morphology, shoot branching or germination control. This Arabidopsis thaliana (Mouse-ear cress) protein is Protein SMAX1-LIKE 2.